A 264-amino-acid chain; its full sequence is Thymidylate synthase (264 aa).

Residue arginine 21 coordinates dUMP. Histidine 51 provides a ligand contact to (6R)-5,10-methylene-5,6,7,8-tetrahydrofolate. 126-127 provides a ligand contact to dUMP; sequence RR. Catalysis depends on cysteine 146, which acts as the Nucleophile. DUMP-binding positions include 166–169, asparagine 177, and 207–209; these read RSCD and HLY. (6R)-5,10-methylene-5,6,7,8-tetrahydrofolate is bound at residue aspartate 169. Position 263 (alanine 263) interacts with (6R)-5,10-methylene-5,6,7,8-tetrahydrofolate.

It belongs to the thymidylate synthase family. Bacterial-type ThyA subfamily. Homodimer.

It localises to the cytoplasm. The catalysed reaction is dUMP + (6R)-5,10-methylene-5,6,7,8-tetrahydrofolate = 7,8-dihydrofolate + dTMP. It participates in pyrimidine metabolism; dTTP biosynthesis. Catalyzes the reductive methylation of 2'-deoxyuridine-5'-monophosphate (dUMP) to 2'-deoxythymidine-5'-monophosphate (dTMP) while utilizing 5,10-methylenetetrahydrofolate (mTHF) as the methyl donor and reductant in the reaction, yielding dihydrofolate (DHF) as a by-product. This enzymatic reaction provides an intracellular de novo source of dTMP, an essential precursor for DNA biosynthesis. The protein is Thymidylate synthase of Shewanella sp. (strain ANA-3).